A 376-amino-acid polypeptide reads, in one-letter code: Probable deoxyhypusine synthase (376 aa).

Residues 105–109, 131–133, Glu-137, and Asp-238 contribute to the NAD(+) site; these read SNLVS and TAG. 136 to 137 lines the spermidine pocket; the sequence is EE. A spermidine-binding site is contributed by Asp-243. Gly-283 is an NAD(+) binding site. Position 288 (His-288) interacts with spermidine. 308-309 lines the NAD(+) pocket; sequence TG. Spermidine-binding positions include 314–316 and 323–329; these read GSD and EAVSWGK. Lys-329 serves as the catalytic Nucleophile. 342-343 is an NAD(+) binding site; sequence EA.

Belongs to the deoxyhypusine synthase family. NAD(+) serves as cofactor.

It carries out the reaction [eIF5A protein]-L-lysine + spermidine = [eIF5A protein]-deoxyhypusine + propane-1,3-diamine. It participates in protein modification; eIF5A hypusination. In terms of biological role, catalyzes the NAD-dependent oxidative cleavage of spermidine and the subsequent transfer of the butylamine moiety of spermidine to the epsilon-amino group of a critical lysine residue of the eIF-5A precursor protein to form the intermediate deoxyhypusine residue. This is the first step of the post-translational modification of that lysine into an unusual amino acid residue named hypusine. Hypusination is unique to mature eIF-5A factor and is essential for its function. This Dictyostelium discoideum (Social amoeba) protein is Probable deoxyhypusine synthase (dhps).